Here is a 479-residue protein sequence, read N- to C-terminus: Small ribosomal subunit protein bS1 (479 aa).

S1 motif domains are found at residues 36-105, 123-188, 209-277, and 294-363; these read GDIV…LSKK, DEAV…LSRR, GAIR…LSLK, and GQIV…LSLK. The tract at residues 429-466 is disordered; that stretch reads TAQMEKFAAAEAEAANAPVSNGSSRSEESSGGTLASDA. The span at 437–460 shows a compositional bias: low complexity; the sequence is AAEAEAANAPVSNGSSRSEESSGG.

Belongs to the bacterial ribosomal protein bS1 family. As to quaternary structure, binds uncharacterized protein MSMEG_2731/MSMEI_2664.

Binds mRNA, facilitating recognition of most mRNAs by the 30S ribosomal subunit during translation initiation. Plays a role in trans-translation; binds tmRNA (the product of the ssrA gene). Binds very poorly to pyrazinoic acid (POA), the active form of the prodrug pyrazinamide (PZA); POA does not disrupt trans-translation in this organism. M.smegmatis is resistant to the antibiotic PZA. In trans-translation Ala-aminoacylated transfer-messenger RNA (tmRNA, product of the ssrA gene; the 2 termini fold to resemble tRNA(Ala) while it encodes a short internal open reading frame (the tag peptide)) acts like a tRNA, entering the A-site of the ribosome and displacing the stalled mRNA (which is subsequently degraded). The ribosome then switches to translate the ORF on the tmRNA, the nascent peptide is terminated with the 'tag peptide' encoded by the tmRNA and thus targeted for degradation. This is Small ribosomal subunit protein bS1 (rpsA) from Mycolicibacterium smegmatis (strain ATCC 700084 / mc(2)155) (Mycobacterium smegmatis).